Reading from the N-terminus, the 395-residue chain is S-adenosylmethionine synthase (395 aa).

His-16 contacts ATP. Asp-18 contacts Mg(2+). Glu-44 is a K(+) binding site. Residues Glu-57 and Gln-100 each contribute to the L-methionine site. Positions 100–110 (QSPDIAQGVDR) are flexible loop. ATP contacts are provided by residues 167-169 (DAK), 233-234 (RF), Asp-242, 248-249 (RK), Ala-265, and Lys-269. Asp-242 serves as a coordination point for L-methionine. Lys-273 lines the L-methionine pocket.

This sequence belongs to the AdoMet synthase family. In terms of assembly, homotetramer; dimer of dimers. The cofactor is Mg(2+). K(+) is required as a cofactor.

Its subcellular location is the cytoplasm. The enzyme catalyses L-methionine + ATP + H2O = S-adenosyl-L-methionine + phosphate + diphosphate. It participates in amino-acid biosynthesis; S-adenosyl-L-methionine biosynthesis; S-adenosyl-L-methionine from L-methionine: step 1/1. Functionally, catalyzes the formation of S-adenosylmethionine (AdoMet) from methionine and ATP. The overall synthetic reaction is composed of two sequential steps, AdoMet formation and the subsequent tripolyphosphate hydrolysis which occurs prior to release of AdoMet from the enzyme. In Burkholderia cenocepacia (strain HI2424), this protein is S-adenosylmethionine synthase.